A 399-amino-acid polypeptide reads, in one-letter code: Tryptophan synthase beta chain (399 aa).

Lys-90 is subject to N6-(pyridoxal phosphate)lysine.

This sequence belongs to the TrpB family. As to quaternary structure, tetramer of two alpha and two beta chains. Pyridoxal 5'-phosphate is required as a cofactor.

It catalyses the reaction (1S,2R)-1-C-(indol-3-yl)glycerol 3-phosphate + L-serine = D-glyceraldehyde 3-phosphate + L-tryptophan + H2O. Its pathway is amino-acid biosynthesis; L-tryptophan biosynthesis; L-tryptophan from chorismate: step 5/5. The beta subunit is responsible for the synthesis of L-tryptophan from indole and L-serine. The chain is Tryptophan synthase beta chain from Lactiplantibacillus plantarum (strain ATCC BAA-793 / NCIMB 8826 / WCFS1) (Lactobacillus plantarum).